Reading from the N-terminus, the 227-residue chain is Triosephosphate isomerase (227 aa).

Residue 6–8 (NLK) participates in substrate binding. His85 serves as the catalytic Electrophile. The active-site Proton acceptor is Glu152. Gly158 and Ser188 together coordinate substrate.

Belongs to the triosephosphate isomerase family. In terms of assembly, homodimer.

The protein localises to the cytoplasm. It carries out the reaction D-glyceraldehyde 3-phosphate = dihydroxyacetone phosphate. The protein operates within carbohydrate biosynthesis; gluconeogenesis. It participates in carbohydrate degradation; glycolysis; D-glyceraldehyde 3-phosphate from glycerone phosphate: step 1/1. Involved in the gluconeogenesis. Catalyzes stereospecifically the conversion of dihydroxyacetone phosphate (DHAP) to D-glyceraldehyde-3-phosphate (G3P). The polypeptide is Triosephosphate isomerase (Campylobacter concisus (strain 13826)).